The following is a 436-amino-acid chain: Histidinol dehydrogenase (436 aa).

Residues tyrosine 136, glutamine 198, and asparagine 221 each coordinate NAD(+). Substrate contacts are provided by serine 244, glutamine 266, and histidine 269. Glutamine 266 and histidine 269 together coordinate Zn(2+). Residues glutamate 334 and histidine 335 each act as proton acceptor in the active site. The substrate site is built by histidine 335, aspartate 368, glutamate 422, and histidine 427. Residue aspartate 368 coordinates Zn(2+). Histidine 427 serves as a coordination point for Zn(2+).

The protein belongs to the histidinol dehydrogenase family. Zn(2+) is required as a cofactor.

The enzyme catalyses L-histidinol + 2 NAD(+) + H2O = L-histidine + 2 NADH + 3 H(+). It functions in the pathway amino-acid biosynthesis; L-histidine biosynthesis; L-histidine from 5-phospho-alpha-D-ribose 1-diphosphate: step 9/9. Functionally, catalyzes the sequential NAD-dependent oxidations of L-histidinol to L-histidinaldehyde and then to L-histidine. The sequence is that of Histidinol dehydrogenase from Dehalococcoides mccartyi (strain CBDB1).